A 562-amino-acid polypeptide reads, in one-letter code: Undecaprenyl phosphate-alpha-4-amino-4-deoxy-L-arabinose arabinosyl transferase (562 aa).

A run of 12 helical transmembrane segments spans residues 14 to 34 (IKFSITIIAFILLYYLIPLNY), 91 to 111 (FSVRFGSFLFTLFSANLIYLF), 120 to 140 (ILSLNSVIIFLSILLVYIIGT), 142 to 162 (SVLDSIISFWINLSMISFWLA), 186 to 206 (FITKGFISLLIPFISIFIWLF), 215 to 235 (TIIHCFFSLLISILIIFPWIY), 267 to 287 (PFWYYFPIFIIGCLPWSGFLF), 302 to 322 (IEFYLLLWIIVQFCFFSISKG), 324 to 344 (LPTYILPCFFPLSILIAKNIE), 354 to 374 (LLKINSIINTIVGSTLLIFII), 395 to 415 (LILCIFSIFVWIFLNLCIIFN), and 425 to 445 (LSIIGIAFLFGLYVPEKIIYA).

Belongs to the glycosyltransferase 83 family.

It localises to the cell inner membrane. It carries out the reaction 4-amino-4-deoxy-alpha-L-arabinopyranosyl di-trans,octa-cis-undecaprenyl phosphate + lipid IVA = lipid IIA + di-trans,octa-cis-undecaprenyl phosphate.. It participates in lipopolysaccharide metabolism; 4-amino-4-deoxy-beta-L-arabinose-lipid A biosynthesis. Its function is as follows. Catalyzes the transfer of the L-Ara4N moiety of the glycolipid undecaprenyl phosphate-alpha-L-Ara4N to lipid A. The modified arabinose is attached to lipid A and is required for resistance to polymyxin and cationic antimicrobial peptides. The chain is Undecaprenyl phosphate-alpha-4-amino-4-deoxy-L-arabinose arabinosyl transferase from Wigglesworthia glossinidia brevipalpis.